A 596-amino-acid polypeptide reads, in one-letter code: Merlin (596 aa).

Phosphoserine is present on Ser13. In terms of domain architecture, FERM spans 22–311 (FTVRIVTMDA…GNHDLFMRRR (290 aa)). Ser518 is modified (phosphoserine; by PAK). A disordered region spans residues 560–580 (VLHSESSDRGGPSSKHNTIKK).

In terms of assembly, interacts with NHERF1, HGS and AGAP2. Interacts with SGSM3. Interacts (via FERM domain) with MPP1. Interacts with LAYN. Interacts with WWC1. Interacts with the CUL4A-RBX1-DDB1-VprBP/DCAF1 E3 ubiquitin-protein ligase complex. The unphosphorylated form interacts (via FERM domain) with VPRBP/DCAF1. Interacts (via FERM domain) with NOP53; the interaction is direct. Interacts with SCHIP1; the interaction is direct. In terms of processing, phosphorylation of Ser-518 inhibits nuclear localization by disrupting the intramolecular association of the FERM domain with the C-terminal tail. The dephosphorylation of Ser-518 favors the interaction with NOP53. Ubiquitinated by the CUL4A-RBX1-DDB1-DCAF1/VprBP E3 ubiquitin-protein ligase complex for ubiquitination and subsequent proteasome-dependent degradation.

It localises to the cell membrane. The protein localises to the cell projection. It is found in the cytoplasm. The protein resides in the cytoskeleton. Its subcellular location is the nucleus. Its function is as follows. Probable regulator of the Hippo/SWH (Sav/Wts/Hpo) signaling pathway, a signaling pathway that plays a pivotal role in tumor suppression by restricting proliferation and promoting apoptosis. Along with WWC1 can synergistically induce the phosphorylation of LATS1 and LATS2 and can probably function in the regulation of the Hippo/SWH (Sav/Wts/Hpo) signaling pathway. May act as a membrane stabilizing protein. May inhibit PI3 kinase by binding to AGAP2 and impairing its stimulating activity. Suppresses cell proliferation and tumorigenesis by inhibiting the CUL4A-RBX1-DDB1-VprBP/DCAF1 E3 ubiquitin-protein ligase complex. Plays a role in lens development and is required for complete fiber cell terminal differentiation, maintenance of cell polarity and separation of the lens vesicle from the corneal epithelium. This is Merlin (Nf2) from Mus musculus (Mouse).